Here is a 362-residue protein sequence, read N- to C-terminus: Porin Omp2b (362 aa).

The N-terminal stretch at 1-22 is a signal peptide; sequence MNIKSLLLGSAAALVAASGAQA.

The protein belongs to the alphaproteobacteria porin family. In terms of assembly, homotrimer.

It localises to the cell outer membrane. In terms of biological role, forms passive diffusion pores that allow small molecular weight hydrophilic materials across the outer membrane. The chain is Porin Omp2b (omp2b) from Brucella melitensis biotype 1 (strain ATCC 23456 / CCUG 17765 / NCTC 10094 / 16M).